The chain runs to 64 residues: Basic secretory protease (64 aa).

The cofactor is a divalent metal cation. Post-translationally, glycosylated.

Inhibited by EDTA. Its function is as follows. Metalloprotease, digests gelatin and azocasein (in vitro). This is Basic secretory protease from Boswellia serrata (Indian frankincense).